We begin with the raw amino-acid sequence, 561 residues long: Acylcarnitine hydrolase (561 aa).

The N-terminal stretch at methionine 1 to glycine 26 is a signal peptide. Cysteines 97 and 125 form a disulfide. Serine 230 (acyl-ester intermediate) is an active-site residue. Residues cysteine 282 and cysteine 293 are joined by a disulfide bond. Residues glutamate 347 and histidine 459 each act as charge relay system in the active site.

It belongs to the type-B carboxylesterase/lipase family. As to expression, expressed in liver, stomach and kidney.

The protein resides in the microsome. Its subcellular location is the endoplasmic reticulum. The enzyme catalyses all-trans-retinyl hexadecanoate + H2O = all-trans-retinol + hexadecanoate + H(+). The catalysed reaction is an O-acyl-(R)-carnitine + H2O = (R)-carnitine + a fatty acid + H(+). Hydrolase with high activity towards palmitoylcarnitine. Is also active with p-nitrophenylacetate and alpha-naphthylacetate. May also hydrolyze retinyl esters. This chain is Acylcarnitine hydrolase, found in Rattus norvegicus (Rat).